Here is a 232-residue protein sequence, read N- to C-terminus: 2-C-methyl-D-erythritol 4-phosphate cytidylyltransferase (232 aa).

This sequence belongs to the IspD/TarI cytidylyltransferase family. IspD subfamily.

It carries out the reaction 2-C-methyl-D-erythritol 4-phosphate + CTP + H(+) = 4-CDP-2-C-methyl-D-erythritol + diphosphate. Its pathway is isoprenoid biosynthesis; isopentenyl diphosphate biosynthesis via DXP pathway; isopentenyl diphosphate from 1-deoxy-D-xylulose 5-phosphate: step 2/6. Catalyzes the formation of 4-diphosphocytidyl-2-C-methyl-D-erythritol from CTP and 2-C-methyl-D-erythritol 4-phosphate (MEP). The chain is 2-C-methyl-D-erythritol 4-phosphate cytidylyltransferase from Nitrosospira multiformis (strain ATCC 25196 / NCIMB 11849 / C 71).